Reading from the N-terminus, the 292-residue chain is RNA 5'-monophosphate methyltransferase (292 aa).

The interval 1–21 (MAVPTELDGGSVKETAAEEES) is disordered. S-adenosyl-L-methionine contacts are provided by residues Arg-46, Asn-76, Asp-110, 135–136 (DF), and Met-164. Residues 53-274 (ELLRQLFPES…KQTIETHPIP (222 aa)) form the Bin3-type SAM domain.

This sequence belongs to the methyltransferase superfamily. As to quaternary structure, interacts with DICER1; the interaction may be mediated by RNA.

It is found in the cytoplasm. The catalysed reaction is a 5'-end 5'-phospho-ribonucleoside-RNA + S-adenosyl-L-methionine = a 5'-end (5'-methylphospho)-ribonucleoside-RNA + S-adenosyl-L-homocysteine. It carries out the reaction a 5'-end 5'-phospho-ribonucleoside-RNA + 2 S-adenosyl-L-methionine = a 5'-end (5'-bismethylphospho)-ribonucleoside-RNA + 2 S-adenosyl-L-homocysteine. Functionally, O-methyltransferase that specifically monomethylates 5'-monophosphate of cytoplasmic histidyl tRNA (tRNA(His)), acting as a capping enzyme by protecting tRNA(His) from cleavage by DICER1. Also able, with less efficiently, to methylate the 5' monophosphate of a subset of pre-miRNAs, acting as a negative regulator of miRNA processing. The 5' monophosphate of pre-miRNAs is recognized by DICER1 and is required for pre-miRNAs processing: methylation at this position reduces the processing of pre-miRNAs by DICER1. Was also reported to mediate dimethylation of pre-miR-145; however dimethylation cannot be reproduced by another group which observes a monomethylation of pre-miR-145. In Homo sapiens (Human), this protein is RNA 5'-monophosphate methyltransferase.